Reading from the N-terminus, the 161-residue chain is Zinc finger A20 and AN1 domain-containing stress-associated protein 4 (161 aa).

An A20-type zinc finger spans residues proline 10 to glutamine 44. Residues cysteine 16, cysteine 20, cysteine 32, and cysteine 35 each contribute to the Zn(2+) site. The span at threonine 76–proline 85 shows a compositional bias: basic and acidic residues. The tract at residues threonine 76–proline 99 is disordered. Residues proline 96–glycine 142 form an AN1-type zinc finger. Zn(2+) contacts are provided by cysteine 102, cysteine 105, cysteine 116, cysteine 118, cysteine 123, histidine 126, histidine 132, and cysteine 134.

Its function is as follows. May be involved in environmental stress response. The chain is Zinc finger A20 and AN1 domain-containing stress-associated protein 4 (SAP4) from Arabidopsis thaliana (Mouse-ear cress).